The sequence spans 346 residues: Uroporphyrinogen decarboxylase (346 aa).

Substrate-binding positions include 26 to 30 (RQAGR), aspartate 76, tyrosine 153, serine 208, and histidine 323.

It belongs to the uroporphyrinogen decarboxylase family. Homodimer.

It is found in the cytoplasm. The enzyme catalyses uroporphyrinogen III + 4 H(+) = coproporphyrinogen III + 4 CO2. Its pathway is porphyrin-containing compound metabolism; protoporphyrin-IX biosynthesis; coproporphyrinogen-III from 5-aminolevulinate: step 4/4. Functionally, catalyzes the decarboxylation of four acetate groups of uroporphyrinogen-III to yield coproporphyrinogen-III. This chain is Uroporphyrinogen decarboxylase, found in Prochlorococcus marinus (strain MIT 9301).